The sequence spans 968 residues: RNA polymerase-associated protein RapA (968 aa).

The 171-residue stretch at 164-334 folds into the Helicase ATP-binding domain; the sequence is DVGRRHAPRV…FARLRLLDPN (171 aa). 177 to 184 is a binding site for ATP; it reads DEVGLGKT. Residues 280-283 carry the DEAH box motif; the sequence is DEAH. A Helicase C-terminal domain is found at 490 to 644; that stretch reads RVEWLMGYLT…TCPTGRTVYD (155 aa).

Belongs to the SNF2/RAD54 helicase family. RapA subfamily. As to quaternary structure, interacts with the RNAP. Has a higher affinity for the core RNAP than for the holoenzyme. Its ATPase activity is stimulated by binding to RNAP.

Its function is as follows. Transcription regulator that activates transcription by stimulating RNA polymerase (RNAP) recycling in case of stress conditions such as supercoiled DNA or high salt concentrations. Probably acts by releasing the RNAP, when it is trapped or immobilized on tightly supercoiled DNA. Does not activate transcription on linear DNA. Probably not involved in DNA repair. This chain is RNA polymerase-associated protein RapA, found in Klebsiella pneumoniae subsp. pneumoniae (strain ATCC 700721 / MGH 78578).